Reading from the N-terminus, the 90-residue chain is UPF0213 protein lwe0147 (90 aa).

One can recognise a GIY-YIG domain in the interval 5–83 (NEHFFYVLKC…SRKNKDSYLI (79 aa)).

Belongs to the UPF0213 family.

In Listeria welshimeri serovar 6b (strain ATCC 35897 / DSM 20650 / CCUG 15529 / CIP 8149 / NCTC 11857 / SLCC 5334 / V8), this protein is UPF0213 protein lwe0147.